The following is a 210-amino-acid chain: Vacuolar protein sorting-associated protein 28 homolog 2 (210 aa).

A VPS28 N-terminal domain is found at 1–99 (MMEVKLWNDK…VTSGLPATVE (99 aa)). In terms of domain architecture, VPS28 C-terminal spans 109 to 205 (SNSASIVAEC…SSYNSFMAAL (97 aa)).

Belongs to the VPS28 family. In terms of assembly, component of the endosomal sorting required for transport complex I (ESCRT-I), composed of ELC, VPS28 and VPS37. Interacts with ELC.

It localises to the endosome. In terms of biological role, component of the ESCRT-I complex (endosomal sorting complex required for transport I), a regulator of vesicular trafficking process. Required for the sorting of endocytic ubiquitinated cargos into multivesicular bodies (MVBs). Mediates the association to the ESCRT-0 complex. The protein is Vacuolar protein sorting-associated protein 28 homolog 2 (VPS28-2) of Arabidopsis thaliana (Mouse-ear cress).